Here is a 91-residue protein sequence, read N- to C-terminus: Antifungal protein opdH (91 aa).

Residues 1 to 18 (MQFSSLSLVFLAVIGAIA) form the signal peptide. The propeptide occupies 19-33 (NPIAVDSELENRDVQ). 3 cysteine pairs are disulfide-bonded: Cys-41/Cys-69, Cys-48/Cys-76, and Cys-61/Cys-87.

The protein belongs to the antifungal protein pafB family.

The protein localises to the secreted. It localises to the host cytoplasm. Antifungal protein; part of the gene cluster that mediates the biosynthesis of oxopyrrolidines, polyketide-amino acid hybrid compounds with feature structures of tetramic acid. Acts as an inhibitor of growth of various molds and yeasts. The sequence is that of Antifungal protein opdH from Penicillium oxalicum (strain 114-2 / CGMCC 5302) (Penicillium decumbens).